The chain runs to 172 residues: Ribosome maturation factor RimM (172 aa).

A PRC barrel domain is found at 97-170 (DDEYYYDEII…LITIDVLEGL (74 aa)).

This sequence belongs to the RimM family. As to quaternary structure, binds ribosomal protein uS19.

The protein resides in the cytoplasm. Functionally, an accessory protein needed during the final step in the assembly of 30S ribosomal subunit, possibly for assembly of the head region. Essential for efficient processing of 16S rRNA. May be needed both before and after RbfA during the maturation of 16S rRNA. It has affinity for free ribosomal 30S subunits but not for 70S ribosomes. The sequence is that of Ribosome maturation factor RimM from Leuconostoc citreum (strain KM20).